We begin with the raw amino-acid sequence, 742 residues long: 5-methyltetrahydropteroyltriglutamate--homocysteine methyltransferase (742 aa).

5-methyltetrahydropteroyltri-L-glutamate contacts are provided by residues 18-21 (REWK) and Lys-112. Residues 420-422 (IGS) and Glu-473 each bind L-homocysteine. L-methionine-binding positions include 420 to 422 (IGS) and Glu-473. A 5-methyltetrahydropteroyltri-L-glutamate-binding site is contributed by Trp-550. Residue Asp-588 coordinates L-homocysteine. Asp-588 is an L-methionine binding site. Residue Glu-594 coordinates 5-methyltetrahydropteroyltri-L-glutamate. Positions 630, 632, and 654 each coordinate Zn(2+). The active-site Proton donor is His-683. Cys-715 lines the Zn(2+) pocket.

Belongs to the vitamin-B12 independent methionine synthase family. It depends on Zn(2+) as a cofactor.

It carries out the reaction 5-methyltetrahydropteroyltri-L-glutamate + L-homocysteine = tetrahydropteroyltri-L-glutamate + L-methionine. It functions in the pathway amino-acid biosynthesis; L-methionine biosynthesis via de novo pathway; L-methionine from L-homocysteine (MetE route): step 1/1. Its function is as follows. Catalyzes the transfer of a methyl group from 5-methyltetrahydrofolate to homocysteine resulting in methionine formation. The polypeptide is 5-methyltetrahydropteroyltriglutamate--homocysteine methyltransferase (Staphylococcus aureus (strain USA300)).